We begin with the raw amino-acid sequence, 249 residues long: LexA repressor (249 aa).

Residues methionine 1–valine 26 are disordered. Over residues arginine 9 to proline 18 the composition is skewed to polar residues. The H-T-H motif DNA-binding region spans methionine 48 to serine 68. Catalysis depends on for autocatalytic cleavage activity residues serine 173 and lysine 210.

This sequence belongs to the peptidase S24 family. Homodimer.

It catalyses the reaction Hydrolysis of Ala-|-Gly bond in repressor LexA.. Functionally, represses a number of genes involved in the response to DNA damage (SOS response), including recA and lexA. In the presence of single-stranded DNA, RecA interacts with LexA causing an autocatalytic cleavage which disrupts the DNA-binding part of LexA, leading to derepression of the SOS regulon and eventually DNA repair. The polypeptide is LexA repressor (Arthrobacter sp. (strain FB24)).